Here is a 188-residue protein sequence, read N- to C-terminus: Dual specificity protein phosphatase 18 (188 aa).

Residues 19 to 160 (GLSQITKSLY…LIHYEFQLFG (142 aa)) form the Tyrosine-protein phosphatase domain. Residues 95–141 (MKQGRTLLHCAAGVSRSAALCLAYLMKYHAMSLLDAHTWTKSCRPII) are sufficient for mitochondrial localization. C104 serves as the catalytic Phosphocysteine intermediate.

This sequence belongs to the protein-tyrosine phosphatase family. Non-receptor class dual specificity subfamily.

The protein localises to the cytoplasm. The protein resides in the nucleus. It is found in the mitochondrion inner membrane. The catalysed reaction is O-phospho-L-tyrosyl-[protein] + H2O = L-tyrosyl-[protein] + phosphate. It carries out the reaction O-phospho-L-seryl-[protein] + H2O = L-seryl-[protein] + phosphate. The enzyme catalyses O-phospho-L-threonyl-[protein] + H2O = L-threonyl-[protein] + phosphate. In terms of biological role, can dephosphorylate single and diphosphorylated synthetic MAPK peptides, with preference for the phosphotyrosine and diphosphorylated forms over phosphothreonine. In vitro, dephosphorylates p-nitrophenyl phosphate (pNPP). This chain is Dual specificity protein phosphatase 18 (DUSP18), found in Pongo abelii (Sumatran orangutan).